The primary structure comprises 360 residues: MTTENQDALSEIASAATLADLEAIRVRTLGKSGTITALLKTLGAMTPDQRQAEGPKIHALREAVTAAIADRKASLEGAALEARLATETLDMSLPVSAGMQGSVHPVAQVMDELAEIFADLGFAVATGPEIEDDWHNFTALNIPETHPARAMHDTFYFPDREDGKKMLLRTHTSPVQIRTMMTEKPPIRIIAPGRTYRSDSDATHTPMFHQVEGLVIDRGIHMGHLKWTLETFVKAFFERDDIVLRLRPSFFPFTEPSAEVDVGFTWEKGRRVIGGDPAAGNGGWMEILGSGMVHPRVIANCGLDPDEWQGFAFGCGIDRLAMLKYGMDDLRAFFDGDLRWLRHYGFAALDVPTLSGGVGA.

Residue E255 participates in Mg(2+) binding.

The protein belongs to the class-II aminoacyl-tRNA synthetase family. Phe-tRNA synthetase alpha subunit type 1 subfamily. As to quaternary structure, tetramer of two alpha and two beta subunits. Mg(2+) serves as cofactor.

The protein localises to the cytoplasm. The catalysed reaction is tRNA(Phe) + L-phenylalanine + ATP = L-phenylalanyl-tRNA(Phe) + AMP + diphosphate + H(+). This is Phenylalanine--tRNA ligase alpha subunit from Rhizorhabdus wittichii (strain DSM 6014 / CCUG 31198 / JCM 15750 / NBRC 105917 / EY 4224 / RW1) (Sphingomonas wittichii).